Here is a 287-residue protein sequence, read N- to C-terminus: Movement protein BC1 (287 aa).

This sequence belongs to the begomovirus movement protein BC1 family. Binds to dimeric supercoiled plasmid DNA. Phosphorylated.

The protein resides in the host cell membrane. The protein localises to the host microsome membrane. It localises to the host endoplasmic reticulum membrane. In terms of biological role, transports viral genome to neighboring plant cells directly through plasmosdesmata, without any budding. The movement protein allows efficient cell to cell propagation, by bypassing the host cell wall barrier. Begomovirus genome is shuttled out of nucleus by Nuclear shuttle protein (NSP) and the movement protein transports the DNA-NSP complex to cell plasmodesmata and facilitates further movement across the cell wall. The polypeptide is Movement protein BC1 (Manihot esculenta (Cassava)).